A 211-amino-acid polypeptide reads, in one-letter code: Thymidylate kinase (211 aa).

Residue 10–17 (GVEGCGKT) participates in ATP binding.

It belongs to the thymidylate kinase family.

It catalyses the reaction dTMP + ATP = dTDP + ADP. Phosphorylation of dTMP to form dTDP in both de novo and salvage pathways of dTTP synthesis. This is Thymidylate kinase from Nostoc sp. (strain PCC 7120 / SAG 25.82 / UTEX 2576).